The primary structure comprises 286 residues: AB hydrolase superfamily protein YfhM (286 aa).

Residues 27–272 (PLIVLLHGFP…ASHWINHEKP (246 aa)) form the AB hydrolase-1 domain. Asp103 serves as the catalytic Nucleophile. Tyr210 acts as the Proton donor in catalysis. His265 acts as the Proton acceptor in catalysis.

The protein belongs to the AB hydrolase superfamily. Epoxide hydrolase family.

The chain is AB hydrolase superfamily protein YfhM (yfhM) from Bacillus subtilis (strain 168).